The primary structure comprises 376 residues: Alpha-ketoglutarate-dependent dioxygenase esdpJ (376 aa).

Residues histidine 145 and aspartate 147 each coordinate Fe cation. A 2-oxoglutarate-binding site is contributed by threonine 202. The tract at residues 234–260 (YNQSSQEKKSEIHVEPRGSPNNVGSDL) is disordered. The span at 239-249 (QEKKSEIHVEP) shows a compositional bias: basic and acidic residues. Residue histidine 335 coordinates Fe cation. 2-oxoglutarate is bound by residues arginine 347 and arginine 351. A disordered region spans residues 354 to 376 (GVGEQPYLDPESKTRREALGEFN). A compositionally biased stretch (basic and acidic residues) spans 363 to 376 (PESKTRREALGEFN).

It belongs to the TfdA dioxygenase family. Requires Fe(2+) as cofactor.

Alpha-ketoglutarate-dependent dioxygenas; part of the cluster that mediates the biosynthesis of shearones, diterpenoid pyrones (DPs) which are structurally diverse meroterpenoids consisting of a diterpene linked by a pyrone, and which may exhibit a range of bioactivities. The alpha-ketoglutarate-dependent dioxygenase esdpJ seems not to be involved in this pathway. The molecular scaffold is commonly biosynthesized by a series of enzymes including the non-reducing polyketide synthase (NR-PKS) esdpA that generates an alpha-pyrone; the prenyltransferase esdpC that attaches a geranylgeranyl pyrophosphate (GGPP) produced by the GGPP synthase (GGPPS) esdpD onto the pyrone unit; the FAD-dependent monooxygenase esdpE that converts an olefin on the diterpene unit into an epoxide; and the terpene cyclase esdpB that catalyzes the cyclization reactions to give the molecular backbone shearone A. In the modification steps, esdpF oxidizes the hydroxy group to a ketone at C-3 and esdpG then attaches hydroxy groups at both C-11 and C-12. After that, esdpI hydroxylates at C-20 and esdpH hydroxylates at C-6'. The ether bridge is generated by nucleophilic attack of the hydroxy group at C-20 to the carbonyl carbon at C-3. EsdpH can also functions prior to esdpI. The different combinations of these modification enzymes lead to the production of diverse shearone derivatives, shearone I being the end product of the pathway. In Penicillium shearii (Eupenicillium shearii), this protein is Alpha-ketoglutarate-dependent dioxygenase esdpJ.